A 200-amino-acid polypeptide reads, in one-letter code: dITP/XTP pyrophosphatase (200 aa).

A substrate-binding site is contributed by 8–13 (SQNSSK). E40 and D69 together coordinate Mg(2+). D69 functions as the Proton acceptor in the catalytic mechanism. Residues S70, 154–157 (FGYD), K177, and 182–183 (HR) contribute to the substrate site.

The protein belongs to the HAM1 NTPase family. As to quaternary structure, homodimer. Requires Mg(2+) as cofactor.

The enzyme catalyses XTP + H2O = XMP + diphosphate + H(+). It catalyses the reaction dITP + H2O = dIMP + diphosphate + H(+). It carries out the reaction ITP + H2O = IMP + diphosphate + H(+). Pyrophosphatase that catalyzes the hydrolysis of nucleoside triphosphates to their monophosphate derivatives, with a high preference for the non-canonical purine nucleotides XTP (xanthosine triphosphate), dITP (deoxyinosine triphosphate) and ITP. Seems to function as a house-cleaning enzyme that removes non-canonical purine nucleotides from the nucleotide pool, thus preventing their incorporation into DNA/RNA and avoiding chromosomal lesions. The sequence is that of dITP/XTP pyrophosphatase from Coxiella burnetii (strain RSA 493 / Nine Mile phase I).